The sequence spans 127 residues: Large ribosomal subunit protein bL19 (127 aa).

This sequence belongs to the bacterial ribosomal protein bL19 family.

Its function is as follows. This protein is located at the 30S-50S ribosomal subunit interface and may play a role in the structure and function of the aminoacyl-tRNA binding site. This is Large ribosomal subunit protein bL19 from Paraburkholderia phymatum (strain DSM 17167 / CIP 108236 / LMG 21445 / STM815) (Burkholderia phymatum).